A 106-amino-acid polypeptide reads, in one-letter code: CRISPR-associated endoribonuclease Cas2 (106 aa).

Residue Asp-8 participates in Mg(2+) binding. A disordered region spans residues 86–106; the sequence is EEAAEAAVSYPGRSRKKARAG.

Belongs to the CRISPR-associated endoribonuclease Cas2 protein family. In terms of assembly, homodimer, forms a heterotetramer with a Cas1 homodimer. Mg(2+) serves as cofactor.

Its function is as follows. CRISPR (clustered regularly interspaced short palindromic repeat), is an adaptive immune system that provides protection against mobile genetic elements (viruses, transposable elements and conjugative plasmids). CRISPR clusters contain sequences complementary to antecedent mobile elements and target invading nucleic acids. CRISPR clusters are transcribed and processed into CRISPR RNA (crRNA). Functions as a ssRNA-specific endoribonuclease. Involved in the integration of spacer DNA into the CRISPR cassette. The chain is CRISPR-associated endoribonuclease Cas2 from Desulforudis audaxviator (strain MP104C).